The chain runs to 278 residues: Biotin synthase (278 aa).

In terms of domain architecture, Radical SAM core spans 1 to 227 (MQIMLCAISN…QSVVMVAGGR (227 aa)). Residues C16, C20, and C23 each contribute to the [4Fe-4S] cluster site. [2Fe-2S] cluster-binding residues include C60, C95, and C153.

It belongs to the radical SAM superfamily. Biotin synthase family. In terms of assembly, homodimer. The cofactor is [4Fe-4S] cluster. [2Fe-2S] cluster is required as a cofactor.

It catalyses the reaction (4R,5S)-dethiobiotin + (sulfur carrier)-SH + 2 reduced [2Fe-2S]-[ferredoxin] + 2 S-adenosyl-L-methionine = (sulfur carrier)-H + biotin + 2 5'-deoxyadenosine + 2 L-methionine + 2 oxidized [2Fe-2S]-[ferredoxin]. The protein operates within cofactor biosynthesis; biotin biosynthesis; biotin from 7,8-diaminononanoate: step 2/2. Its function is as follows. Catalyzes the conversion of dethiobiotin (DTB) to biotin by the insertion of a sulfur atom into dethiobiotin via a radical-based mechanism. This Campylobacter jejuni subsp. jejuni serotype O:6 (strain 81116 / NCTC 11828) protein is Biotin synthase.